Consider the following 95-residue polypeptide: Turripeptide OL184 (95 aa).

In terms of processing, contains 5 disulfide bonds. As to expression, expressed by the venom duct.

The protein resides in the secreted. In terms of biological role, acts as a neurotoxin by inhibiting an ion channel. The polypeptide is Turripeptide OL184 (Iotyrris olangoensis (Sea snail)).